Consider the following 409-residue polypeptide: Putative competence-damage inducible protein (409 aa).

It belongs to the CinA family.

The chain is Putative competence-damage inducible protein from Clostridium botulinum (strain Okra / Type B1).